The following is a 177-amino-acid chain: Probable DNA-directed RNA polymerase subunit delta (177 aa).

The region spanning 14–81 (CSMIEVVHSV…GENRWGLRSW (68 aa)) is the HTH HARE-type domain. The interval 91 to 177 (ILPQPKPKKK…DETEEEEEEL (87 aa)) is disordered. The segment covering 106 to 177 (DGFDDYIEED…DETEEEEEEL (72 aa)) has biased composition (acidic residues).

This sequence belongs to the RpoE family. RNAP is composed of a core of 2 alpha, a beta and a beta' subunits. The core is associated with a delta subunit and one of several sigma factors.

Its function is as follows. Participates in both the initiation and recycling phases of transcription. In the presence of the delta subunit, RNAP displays an increased specificity of transcription, a decreased affinity for nucleic acids, and an increased efficiency of RNA synthesis because of enhanced recycling. The protein is Probable DNA-directed RNA polymerase subunit delta of Bacillus cereus (strain G9842).